Here is a 464-residue protein sequence, read N- to C-terminus: 3-isopropylmalate dehydratase large subunit (464 aa).

[4Fe-4S] cluster contacts are provided by C337, C397, and C400.

It belongs to the aconitase/IPM isomerase family. LeuC type 1 subfamily. As to quaternary structure, heterodimer of LeuC and LeuD. The cofactor is [4Fe-4S] cluster.

It carries out the reaction (2R,3S)-3-isopropylmalate = (2S)-2-isopropylmalate. Its pathway is amino-acid biosynthesis; L-leucine biosynthesis; L-leucine from 3-methyl-2-oxobutanoate: step 2/4. Its function is as follows. Catalyzes the isomerization between 2-isopropylmalate and 3-isopropylmalate, via the formation of 2-isopropylmaleate. This is 3-isopropylmalate dehydratase large subunit from Bacillus cereus (strain ATCC 10987 / NRS 248).